The primary structure comprises 160 residues: Allophycocyanin alpha chain (160 aa).

Residue Asn-70 is modified to N4-methylasparagine. Cys-80 contacts (2R,3E)-phycocyanobilin.

It belongs to the phycobiliprotein family. As to quaternary structure, component of the phycobilisome. Heterodimer of an alpha and a beta chain. Post-translationally, contains one covalently linked phycocyanobilin chromophore.

Its subcellular location is the cellular thylakoid membrane. Its function is as follows. Light-harvesting photosynthetic bile pigment-protein from the phycobiliprotein complex. Allophycocyanin has a maximum absorption at approximately 650 nanometers. This is Allophycocyanin alpha chain (apcA) from Mastigocladus laminosus (Fischerella sp.).